Reading from the N-terminus, the 103-residue chain is Large ribosomal subunit protein bL21 (103 aa).

This sequence belongs to the bacterial ribosomal protein bL21 family. As to quaternary structure, part of the 50S ribosomal subunit. Contacts protein L20.

In terms of biological role, this protein binds to 23S rRNA in the presence of protein L20. In Delftia acidovorans (strain DSM 14801 / SPH-1), this protein is Large ribosomal subunit protein bL21.